Here is a 239-residue protein sequence, read N- to C-terminus: Ribonuclease 3 (239 aa).

In terms of domain architecture, RNase III spans 12–137; it reads ISRLEALIGY…LIATLYLDGG (126 aa). A Mg(2+)-binding site is contributed by glutamate 50. Aspartate 54 is a catalytic residue. 2 residues coordinate Mg(2+): aspartate 123 and glutamate 126. Residue glutamate 126 is part of the active site. The 70-residue stretch at 162–231 folds into the DRBM domain; it reads DAKTELQEWA…ATRLLEREGV (70 aa).

The protein belongs to the ribonuclease III family. In terms of assembly, homodimer. Mg(2+) is required as a cofactor.

The protein resides in the cytoplasm. The catalysed reaction is Endonucleolytic cleavage to 5'-phosphomonoester.. Functionally, digests double-stranded RNA. Involved in the processing of primary rRNA transcript to yield the immediate precursors to the large and small rRNAs (23S and 16S). Processes some mRNAs, and tRNAs when they are encoded in the rRNA operon. Processes pre-crRNA and tracrRNA of type II CRISPR loci if present in the organism. The polypeptide is Ribonuclease 3 (Agrobacterium fabrum (strain C58 / ATCC 33970) (Agrobacterium tumefaciens (strain C58))).